Reading from the N-terminus, the 508-residue chain is Lysine--tRNA ligase (508 aa).

Residues Glu-418 and Glu-425 each contribute to the Mg(2+) site.

Belongs to the class-II aminoacyl-tRNA synthetase family. As to quaternary structure, homodimer. Mg(2+) serves as cofactor.

The protein resides in the cytoplasm. The catalysed reaction is tRNA(Lys) + L-lysine + ATP = L-lysyl-tRNA(Lys) + AMP + diphosphate. The sequence is that of Lysine--tRNA ligase from Burkholderia multivorans (strain ATCC 17616 / 249).